We begin with the raw amino-acid sequence, 437 residues long: Chromosomal replication initiator protein DnaA (437 aa).

The interval 1 to 67 (MKNKIIASLK…KVVKDILGKD (67 aa)) is domain I, interacts with DnaA modulators. The segment at 67–97 (DATYEITFKEIPYETKVESGPLIKKRPLLIT) is domain II. The tract at residues 98–313 (PLNPKYTFEN…GAILRLIAYR (216 aa)) is domain III, AAA+ region. The ATP site is built by Gly141, Gly143, Lys144, and Thr145. Residues 314–437 (NLYGTLNLSI…SKGFAQGESM (124 aa)) are domain IV, binds dsDNA.

This sequence belongs to the DnaA family. As to quaternary structure, oligomerizes as a right-handed, spiral filament on DNA at oriC.

The protein resides in the cytoplasm. Its function is as follows. Plays an essential role in the initiation and regulation of chromosomal replication. ATP-DnaA binds to the origin of replication (oriC) to initiate formation of the DNA replication initiation complex once per cell cycle. Binds the DnaA box (a 9 base pair repeat at the origin) and separates the double-stranded (ds)DNA. Forms a right-handed helical filament on oriC DNA; dsDNA binds to the exterior of the filament while single-stranded (ss)DNA is stabiized in the filament's interior. The ATP-DnaA-oriC complex binds and stabilizes one strand of the AT-rich DNA unwinding element (DUE), permitting loading of DNA polymerase. After initiation quickly degrades to an ADP-DnaA complex that is not apt for DNA replication. Binds acidic phospholipids. This is Chromosomal replication initiator protein DnaA from Thermosipho melanesiensis (strain DSM 12029 / CIP 104789 / BI429).